The primary structure comprises 270 residues: ES1 protein, mitochondrial (270 aa).

In terms of tissue distribution, expressed specifically in the inner segments of cone photoreceptor cells of the retina (at protein level).

The protein resides in the mitochondrion. Its function is as follows. Plays a role in promoting mitochondrial enlargement in cone photoreceptor cells in a fusion-independent and ATP-dependent manner. The sequence is that of ES1 protein, mitochondrial from Danio rerio (Zebrafish).